Reading from the N-terminus, the 687-residue chain is Glycine--tRNA ligase beta subunit (687 aa).

This sequence belongs to the class-II aminoacyl-tRNA synthetase family. As to quaternary structure, tetramer of two alpha and two beta subunits.

It is found in the cytoplasm. The enzyme catalyses tRNA(Gly) + glycine + ATP = glycyl-tRNA(Gly) + AMP + diphosphate. This is Glycine--tRNA ligase beta subunit from Trichlorobacter lovleyi (strain ATCC BAA-1151 / DSM 17278 / SZ) (Geobacter lovleyi).